A 365-amino-acid chain; its full sequence is Aminomethyltransferase (365 aa).

Belongs to the GcvT family. The glycine cleavage system is composed of four proteins: P, T, L and H.

It catalyses the reaction N(6)-[(R)-S(8)-aminomethyldihydrolipoyl]-L-lysyl-[protein] + (6S)-5,6,7,8-tetrahydrofolate = N(6)-[(R)-dihydrolipoyl]-L-lysyl-[protein] + (6R)-5,10-methylene-5,6,7,8-tetrahydrofolate + NH4(+). The glycine cleavage system catalyzes the degradation of glycine. The polypeptide is Aminomethyltransferase (Halalkalibacterium halodurans (strain ATCC BAA-125 / DSM 18197 / FERM 7344 / JCM 9153 / C-125) (Bacillus halodurans)).